Reading from the N-terminus, the 101-residue chain is uncharacterized protein (101 aa).

An N-terminal signal peptide occupies residues 1–25; sequence MISIPFRSTMSRTLVFIILPTVLSC.

This is an uncharacterized protein from Saccharomyces cerevisiae (strain ATCC 204508 / S288c) (Baker's yeast).